The chain runs to 104 residues: V-type ATP synthase subunit F (104 aa).

It belongs to the V-ATPase F subunit family.

Functionally, produces ATP from ADP in the presence of a proton gradient across the membrane. In Thermus thermophilus (strain ATCC 27634 / DSM 579 / HB8), this protein is V-type ATP synthase subunit F (atpF).